We begin with the raw amino-acid sequence, 278 residues long: uncharacterized protein (278 aa).

This is an uncharacterized protein from Escherichia coli (strain K12).